A 66-amino-acid chain; its full sequence is Toxin Tppa2 (66 aa).

One can recognise an LCN-type CS-alpha/beta domain in the interval 1 to 63 (KDGYLVGNDG…TWSRATNKCG (63 aa)). 4 disulfide bridges follow: C11/C62, C15/C37, C23/C43, and C27/C45. At C62 the chain carries Cysteine amide.

Belongs to the long (4 C-C) scorpion toxin superfamily. Sodium channel inhibitor family. Beta subfamily. In terms of tissue distribution, expressed by the venom gland.

It is found in the secreted. Functionally, beta toxins bind voltage-independently at site-4 of sodium channels (Nav) and shift the voltage of activation toward more negative potentials thereby affecting sodium channel activation and promoting spontaneous and repetitive firing. This chain is Toxin Tppa2, found in Tityus pachyurus (Colombian scorpion).